The sequence spans 442 residues: Trigger factor (442 aa).

Residues 165–250 enclose the PPIase FKBP-type domain; that stretch reads DDRVIIDFEG…LQKVMAPELP (86 aa).

The protein belongs to the FKBP-type PPIase family. Tig subfamily.

It localises to the cytoplasm. The catalysed reaction is [protein]-peptidylproline (omega=180) = [protein]-peptidylproline (omega=0). In terms of biological role, involved in protein export. Acts as a chaperone by maintaining the newly synthesized protein in an open conformation. Functions as a peptidyl-prolyl cis-trans isomerase. The polypeptide is Trigger factor (Coxiella burnetii (strain RSA 493 / Nine Mile phase I)).